The primary structure comprises 223 residues: UPF0441 protein YgiB (223 aa).

The segment covering 178 to 195 has biased composition (low complexity); the sequence is TVPKTAMAPKPATTTTVT. The disordered stretch occupies residues 178 to 223; that stretch reads TVPKTAMAPKPATTTTVTRGGFGESVAKQSTMQRSAAGTSTRSMGG. Residues 204–223 are compositionally biased toward polar residues; that stretch reads AKQSTMQRSAAGTSTRSMGG.

The protein belongs to the UPF0441 family.

The chain is UPF0441 protein YgiB from Salmonella paratyphi A (strain ATCC 9150 / SARB42).